Consider the following 449-residue polypeptide: UDP-N-acetylmuramate--L-alanine ligase (449 aa).

121–127 (GAHGKSS) is a binding site for ATP.

This sequence belongs to the MurCDEF family.

It localises to the cytoplasm. The enzyme catalyses UDP-N-acetyl-alpha-D-muramate + L-alanine + ATP = UDP-N-acetyl-alpha-D-muramoyl-L-alanine + ADP + phosphate + H(+). Its pathway is cell wall biogenesis; peptidoglycan biosynthesis. Its function is as follows. Cell wall formation. In Helicobacter pylori (strain J99 / ATCC 700824) (Campylobacter pylori J99), this protein is UDP-N-acetylmuramate--L-alanine ligase.